The primary structure comprises 483 residues: Glycogen synthase (483 aa).

ADP-alpha-D-glucose is bound at residue Lys-15.

The protein belongs to the glycosyltransferase 1 family. Bacterial/plant glycogen synthase subfamily.

It carries out the reaction [(1-&gt;4)-alpha-D-glucosyl](n) + ADP-alpha-D-glucose = [(1-&gt;4)-alpha-D-glucosyl](n+1) + ADP + H(+). Its pathway is glycan biosynthesis; glycogen biosynthesis. Functionally, synthesizes alpha-1,4-glucan chains using ADP-glucose. The chain is Glycogen synthase from Thioalkalivibrio sulfidiphilus (strain HL-EbGR7).